Consider the following 138-residue polypeptide: MGMGMMEVHLISGKGLQAHDPLNKPIDPYAEINFKGQERMSKVAKNAGPDPIWNEKFKFLVEYPGSGGDFHILFKVMDHDAIDGDDYIGDVKIDVQNLLAEGVRKGWSELPPRMYQVLAHKIYFKGEIEVGVFFQRQG.

Residues 1-108 form the C2 domain; that stretch reads MGMGMMEVHL…LAEGVRKGWS (108 aa). Ca(2+)-binding residues include Asp20, Asp27, Asp78, Asp80, and Asp86.

Requires Ca(2+) as cofactor. In terms of tissue distribution, sieve elements of leaves, stems, roots and flowers.

Binds to both sense and antisense RNA. Interacts with mesophyll plasmodesmata to mediate its own cell-to-cell transport and potentiate RNA trafficking. The polypeptide is 16 kDa phloem protein 2 (PP16-2) (Cucurbita maxima (Pumpkin)).